Reading from the N-terminus, the 302-residue chain is Probable alpha-L-glutamate ligase (302 aa).

Positions 104 to 287 constitute an ATP-grasp domain; that stretch reads MQLLSREGVG…VAGMIIEFIE (184 aa). ATP-binding positions include Lys141, 178 to 179, Asp187, and 211 to 213; these read EF and RSN. Mg(2+) contacts are provided by Asp248, Glu260, and Asn262. Mn(2+)-binding residues include Asp248, Glu260, and Asn262.

The protein belongs to the RimK family. Requires Mg(2+) as cofactor. Mn(2+) serves as cofactor.

The polypeptide is Probable alpha-L-glutamate ligase (Halorhodospira halophila (strain DSM 244 / SL1) (Ectothiorhodospira halophila (strain DSM 244 / SL1))).